A 144-amino-acid polypeptide reads, in one-letter code: Large ribosomal subunit protein uL15 (144 aa).

A disordered region spans residues 1–49 (MRLNTLSPAAGAKSAAKRVGRGIGSGTGKTCGRGHKGQKSRSGGGVRVG). Over residues 21-31 (RGIGSGTGKTC) the composition is skewed to gly residues.

The protein belongs to the universal ribosomal protein uL15 family. In terms of assembly, part of the 50S ribosomal subunit.

In terms of biological role, binds to the 23S rRNA. This Shewanella halifaxensis (strain HAW-EB4) protein is Large ribosomal subunit protein uL15.